Here is a 116-residue protein sequence, read N- to C-terminus: Venom nerve growth factor (116 aa).

Cystine bridges form between C14–C78, C56–C106, and C66–C108.

Belongs to the NGF-beta family. Homodimer; non-covalently linked. Not glycosylated. In terms of tissue distribution, expressed by the venom gland.

The protein resides in the secreted. Its function is as follows. Nerve growth factor is important for the development and maintenance of the sympathetic and sensory nervous systems. It stimulates division and differentiation of sympathetic and embryonic sensory neurons as well as basal forebrain cholinergic neurons in the brain. Its relevance in the snake venom is not clear. However, it has been shown to inhibit metalloproteinase-dependent proteolysis of platelet glycoprotein Ib alpha, suggesting a metalloproteinase inhibition to prevent metalloprotease autodigestion and/or protection against prey proteases. Binds a lipid between the two protein chains in the homodimer. The lipid-bound form promotes histamine relase from mouse mast cells, contrary to the lipid-free form. The polypeptide is Venom nerve growth factor (Naja naja (Indian cobra)).